Consider the following 497-residue polypeptide: Bloodstream-specific protein 2 (497 aa).

The N-terminal stretch at 1 to 14 is a signal peptide; that stretch reads MRAIFLVALALATM. In terms of domain architecture, Thioredoxin 1 spans 15-124; the sequence is RESTAESLKL…IIKYIKANVG (110 aa). Residue asparagine 30 is glycosylated (N-linked (GlcNAc...) asparagine). A disulfide bridge links cysteine 48 with cysteine 51. N-linked (GlcNAc...) asparagine glycosylation is found at asparagine 63, asparagine 85, asparagine 153, asparagine 154, asparagine 250, and asparagine 278. The Thioredoxin 2 domain occupies 334 to 455; it reads EPTIKSLPVP…VYEFVRKHVT (122 aa). Active-site nucleophile residues include cysteine 378 and cysteine 381. Cysteine 378 and cysteine 381 are oxidised to a cystine. 6 N-linked (GlcNAc...) asparagine glycosylation sites follow: asparagine 413, asparagine 465, asparagine 476, asparagine 482, asparagine 485, and asparagine 488. Residues 461–497 form a disordered region; it reads EKPANVTEEKKSEEENKSSKSNESNDSNESNVDKQDL. Positions 467–480 are enriched in basic and acidic residues; that stretch reads TEEKKSEEENKSSK. A compositionally biased stretch (low complexity) spans 481 to 490; sequence SNESNDSNES.

The protein belongs to the protein disulfide isomerase family.

This Trypanosoma brucei brucei protein is Bloodstream-specific protein 2 (BS2).